Reading from the N-terminus, the 150-residue chain is Ankyrin repeat protein C18/B24 (150 aa).

Residues 41-73 form an ANK repeat; the sequence is ENKTLLYYAVDVNNIQFAKRLLEYGASVTTSRS.

The polypeptide is Ankyrin repeat protein C18/B24 (Vaccinia virus (strain Copenhagen) (VACV)).